The primary structure comprises 634 residues: Glutamyl-tRNA(Gln) amidotransferase subunit E (634 aa).

This sequence belongs to the GatB/GatE family. GatE subfamily. Heterodimer of GatD and GatE.

The enzyme catalyses L-glutamyl-tRNA(Gln) + L-glutamine + ATP + H2O = L-glutaminyl-tRNA(Gln) + L-glutamate + ADP + phosphate + H(+). Functionally, allows the formation of correctly charged Gln-tRNA(Gln) through the transamidation of misacylated Glu-tRNA(Gln) in organisms which lack glutaminyl-tRNA synthetase. The reaction takes place in the presence of glutamine and ATP through an activated gamma-phospho-Glu-tRNA(Gln). The GatDE system is specific for glutamate and does not act on aspartate. The polypeptide is Glutamyl-tRNA(Gln) amidotransferase subunit E (Sulfolobus acidocaldarius (strain ATCC 33909 / DSM 639 / JCM 8929 / NBRC 15157 / NCIMB 11770)).